We begin with the raw amino-acid sequence, 164 residues long: Endoribonuclease YbeY (164 aa).

Residues H124, H128, and H134 each coordinate Zn(2+).

The protein belongs to the endoribonuclease YbeY family. Zn(2+) is required as a cofactor.

The protein resides in the cytoplasm. Single strand-specific metallo-endoribonuclease involved in late-stage 70S ribosome quality control and in maturation of the 3' terminus of the 16S rRNA. The protein is Endoribonuclease YbeY of Nitrosomonas europaea (strain ATCC 19718 / CIP 103999 / KCTC 2705 / NBRC 14298).